The primary structure comprises 158 residues: NAD(P)H-quinone oxidoreductase subunit J, chloroplastic (158 aa).

Belongs to the complex I 30 kDa subunit family. In terms of assembly, NDH is composed of at least 16 different subunits, 5 of which are encoded in the nucleus.

Its subcellular location is the plastid. The protein localises to the chloroplast thylakoid membrane. It carries out the reaction a plastoquinone + NADH + (n+1) H(+)(in) = a plastoquinol + NAD(+) + n H(+)(out). The enzyme catalyses a plastoquinone + NADPH + (n+1) H(+)(in) = a plastoquinol + NADP(+) + n H(+)(out). Its function is as follows. NDH shuttles electrons from NAD(P)H:plastoquinone, via FMN and iron-sulfur (Fe-S) centers, to quinones in the photosynthetic chain and possibly in a chloroplast respiratory chain. The immediate electron acceptor for the enzyme in this species is believed to be plastoquinone. Couples the redox reaction to proton translocation, and thus conserves the redox energy in a proton gradient. The protein is NAD(P)H-quinone oxidoreductase subunit J, chloroplastic of Psilotum nudum (Whisk fern).